A 264-amino-acid chain; its full sequence is Pimeloyl-[acyl-carrier protein] methyl ester esterase (264 aa).

Positions 23-244 (LVMLHGWGVN…MLAKASHAPF (222 aa)) constitute an AB hydrolase-1 domain. Residues Trp-29, 87–88 (SL), and 150–154 (FLAIQ) contribute to the substrate site. Residue Ser-87 is the Nucleophile of the active site. Catalysis depends on residues Asp-214 and His-241. Residue His-241 participates in substrate binding.

This sequence belongs to the AB hydrolase superfamily. Carboxylesterase BioH family. In terms of assembly, monomer.

The protein resides in the cytoplasm. It carries out the reaction 6-carboxyhexanoyl-[ACP] methyl ester + H2O = 6-carboxyhexanoyl-[ACP] + methanol + H(+). It functions in the pathway cofactor biosynthesis; biotin biosynthesis. The physiological role of BioH is to remove the methyl group introduced by BioC when the pimeloyl moiety is complete. It allows to synthesize pimeloyl-ACP via the fatty acid synthetic pathway through the hydrolysis of the ester bonds of pimeloyl-ACP esters. The chain is Pimeloyl-[acyl-carrier protein] methyl ester esterase from Shewanella sp. (strain MR-7).